The chain runs to 165 residues: Transcription factor zip-10 (165 aa).

Residues 53–71 are compositionally biased toward low complexity; the sequence is ASLGTSTTSSSRCSSTESS. Residues 53–99 are disordered; it reads ASLGTSTTSSSRCSSTESSAAPGKIRRGRPQQEIADGQDAHSQKKRH. Residues 104 to 150 adopt a coiled-coil conformation; the sequence is ARQYRAQMRQKVENVKSLHDEKEQLELEVKALRQAVSGLQQENAQKD.

The protein localises to the nucleus. Transcription factor that regulates the expression of genes in response to changes in temperature. In particular, binds to the promoter region of genes such as asp-17 in response to severe cold to warm temperature transitions to promote gene expression. Promotes stress-induced death, particularly in older animals, following cold shock followed by warming and this may have evolved as a form of kin survival under thermal stress conditions, favoring the survival of younger animals. In Caenorhabditis elegans, this protein is Transcription factor zip-10.